The sequence spans 123 residues: QNDAYRGFLRKHYDPSPTGHDDRYCNTMMERRNMTRPCKDTNTFIHGNSDDIRAVCDDRNGEPYRNGLRRSRSPFQVTTCRHRGGSPRPPCRYRAFRANRVIVIRCRDGFPIHLEENFIPPRP.

Glutamine 1 is modified (pyrrolidone carboxylic acid). Histidine 12 serves as the catalytic Proton acceptor. 3 disulfide bridges follow: cysteine 25-cysteine 80, cysteine 38-cysteine 91, and cysteine 56-cysteine 106. Positions glutamate 30–methionine 34 match the Nucleolar localization signal motif. An N-linked (GlcNAc...) asparagine glycan is attached at asparagine 33. Residues aspartate 40, histidine 82, and histidine 113 each contribute to the Zn(2+) site. Histidine 113 functions as the Proton donor in the catalytic mechanism.

This sequence belongs to the pancreatic ribonuclease family. As to expression, serum and milk.

It localises to the cytoplasmic vesicle. The protein localises to the secretory vesicle lumen. It is found in the secreted. Its subcellular location is the nucleus. The protein resides in the nucleolus. Its activity is regulated as follows. Divalent metal ions, such as Cu2+ and Zn2+, may inhibit the ribonucleolytic activity. In terms of biological role, binds tightly to placental ribonuclease inhibitor and has very low ribonuclease activity. Has potent angiogenic activity. Angiogenin induces vascularization of normal and malignant tissues. Abolishes protein synthesis by specifically hydrolyzing cellular tRNAs. This chain is Angiogenin-2, found in Bos taurus (Bovine).